The following is a 154-amino-acid chain: Periplasmic nitrate reductase, electron transfer subunit (154 aa).

An N-terminal signal peptide occupies residues 1-24 (MSMHPALRLLATVLVALGAGPAFT). The tract at residues 27 to 47 (APRLTGADRPMSEVAAPPLPE) is disordered. Residues His68, Cys82, Cys85, His86, His103, Cys122, Cys125, and His126 each contribute to the heme c site.

Belongs to the NapB family. Component of the periplasmic nitrate reductase NapAB complex composed of NapA and NapB. Binds 2 heme C groups per subunit.

It is found in the periplasm. Its function is as follows. Electron transfer subunit of the periplasmic nitrate reductase complex NapAB. Receives electrons from the membrane-anchored tetraheme c-type NapC protein and transfers these to NapA subunit, thus allowing electron flow between membrane and periplasm. Essential for periplasmic nitrate reduction with nitrate as the terminal electron acceptor. The protein is Periplasmic nitrate reductase, electron transfer subunit of Cereibacter sphaeroides (Rhodobacter sphaeroides).